The primary structure comprises 196 residues: MVKIGVLGLQGAVREHVKSVEASGAEAVVVKRIEQLEEIDGLILPGGESTTMRRLIDKYAFMEPLRTFAKSGKPMFGTCAGMILLAKTLIGYEEAHIGAMDITVERNAFGRQKDSFEAALSIEGVGEDFVGVFIRAPYVVEVADNVEVLSKHGNRMVAVRQDQFLAASFHPELTDDHRVTAYFVEMVKEAKMKKVV.

47-49 (GES) lines the L-glutamine pocket. Catalysis depends on Cys79, which acts as the Nucleophile. Residues Arg106 and 134-135 (IR) each bind L-glutamine. Active-site charge relay system residues include His170 and Glu172.

Belongs to the glutaminase PdxT/SNO family. In the presence of PdxS, forms a dodecamer of heterodimers. Only shows activity in the heterodimer.

The enzyme catalyses aldehydo-D-ribose 5-phosphate + D-glyceraldehyde 3-phosphate + L-glutamine = pyridoxal 5'-phosphate + L-glutamate + phosphate + 3 H2O + H(+). The catalysed reaction is L-glutamine + H2O = L-glutamate + NH4(+). It functions in the pathway cofactor biosynthesis; pyridoxal 5'-phosphate biosynthesis. Functionally, catalyzes the hydrolysis of glutamine to glutamate and ammonia as part of the biosynthesis of pyridoxal 5'-phosphate. The resulting ammonia molecule is channeled to the active site of PdxS. This is Pyridoxal 5'-phosphate synthase subunit PdxT from Bacillus cereus (strain B4264).